Reading from the N-terminus, the 375-residue chain is MQKLQLCVYIYLFMLIVAGPVDLNENSEQKENVEKEGLCNACTWRQNTKSSRIEAIKIQILSKLRLETAPNISKDAIRQLLPKAPPLRELIDQYDVQRDDSSDGSLEDDDYHATTETIITMPTESDFLMQVDGKPKCCFFKFSSKIQYNKVVKAQLWIYLRPVETPTTVFVQILRLIKPMKDGTRYTGIRSLKLDMNPGTGIWQSIDVKTVLQNWLKQPESNLGIEIKALDENGHDLAVTFPGPGEDGLNPFLEVKVTDTPKRSRRDFGLDCDEHSTESRCCRYPLTVDFEALGWDWIIAPKRYKANYCSGECEFVFLQKYPHTHLVHQANPRGSAGPCCTPTKMSPINMLYFNGKEQIIYGKIPAMVVDRCGCS.

The signal sequence occupies residues 1-23 (MQKLQLCVYIYLFMLIVAGPVDL). Positions 24–266 (NENSEQKENV…VTDTPKRSRR (243 aa)) are excised as a propeptide. Residue asparagine 71 is glycosylated (N-linked (GlcNAc...) asparagine). 4 disulfide bridges follow: cysteine 272–cysteine 282, cysteine 281–cysteine 340, cysteine 309–cysteine 372, and cysteine 313–cysteine 374.

This sequence belongs to the TGF-beta family. As to quaternary structure, homodimer; disulfide-linked. Interacts with WFIKKN2, leading to inhibit its activity. Interacts with FSTL3. Synthesized as large precursor molecule that undergoes proteolytic cleavage to generate an N-terminal propeptide and a disulfide linked C-terminal dimer, which is the biologically active molecule. The circulating form consists of a latent complex of the C-terminal dimer and other proteins, including its propeptide, which maintain the C-terminal dimer in a latent, inactive state. Ligand activation requires additional cleavage of the prodomain by a tolloid-like metalloproteinase.

Its subcellular location is the secreted. Acts specifically as a negative regulator of skeletal muscle growth. This chain is Growth/differentiation factor 8 (MSTN), found in Papio hamadryas (Hamadryas baboon).